The chain runs to 98 residues: NADH-ubiquinone oxidoreductase chain 4L (98 aa).

3 helical membrane-spanning segments follow: residues 1–21 (MTTM…GVYI), 29–49 (TLLC…LTLL), and 59–79 (FPLI…ALLV).

It belongs to the complex I subunit 4L family. Core subunit of respiratory chain NADH dehydrogenase (Complex I) which is composed of 45 different subunits.

It localises to the mitochondrion inner membrane. It carries out the reaction a ubiquinone + NADH + 5 H(+)(in) = a ubiquinol + NAD(+) + 4 H(+)(out). Core subunit of the mitochondrial membrane respiratory chain NADH dehydrogenase (Complex I) which catalyzes electron transfer from NADH through the respiratory chain, using ubiquinone as an electron acceptor. Part of the enzyme membrane arm which is embedded in the lipid bilayer and involved in proton translocation. This is NADH-ubiquinone oxidoreductase chain 4L (MT-ND4L) from Zaglossus bruijni (Western long-beaked echidna).